A 1040-amino-acid chain; its full sequence is Putative protein tag-76 (1040 aa).

The segment covering 1–15 has biased composition (polar residues); that stretch reads MSRRNATSFVDNNTL. Disordered stretches follow at residues 1 to 61 and 322 to 367; these read MSRR…GSVS and RTSK…PGAN. Residues 16–32 show a composition bias toward low complexity; sequence TSSGISGSGSMSPPITS. Residues 33-50 show a composition bias toward polar residues; the sequence is RPASGQASPLTSNGSLSP. A compositionally biased stretch (gly residues) spans 333–356; sequence GPGGPGGPGGYRGGRGGGRGGSYG. In terms of domain architecture, PAZ spans 379-486; it reads FTMDTLSRDT…LPMEHCLIDS (108 aa). The region spanning 660–966 is the Piwi domain; sequence CIIVVLQSKN…VATRARCHVK (307 aa).

The protein is Putative protein tag-76 (tag-76) of Caenorhabditis elegans.